Reading from the N-terminus, the 527-residue chain is MQLQKPLKIGLGMMGAGLFGIIFGWVLFPVILKSQLKKEMALSKKTDVRAMWEKIPFALDFKVYMFNYTNVEEIMKGAAPIVKEIGPFHFDEWKEKVDIEDHDEDDTITYKKRDYFYFRPDKSGPGLTGEEVVVMPHLLMLSMATIVNNDKPAMLNMLGKAFNGIFDEPKDIFMRVKVLDLLFRGIIINCARTEFAPKAVCTALKKEGATGMTFEPNNQFRFSLFGMRNGTIDPHVVTVRRGIKNVMDVGKVIAIDGKTEQDVWRDKCNEFEGTDGTVFPPFLTEKDNLESFSGDLCRSFKPWYQKKTSYRGIKTNRYVANIGDFANDPELQCYCDSPDKCPPKGLMDLMKCMKAPMYASLPHYLDSDPQLLKDVKGLSPDANEHGIEIDFEPISGTPMVAKQRVQFNIILLKADKMDLIKDLPGTMTPLFWIEEGLALNKTFVKMLKNQLFIPKRIVSVVKWLLAGVGFVGLVGSLVYQFKGKMINFALSPSSAPVTKVNPEINQQNQPKDISIIGESQNPPKVDM.

The Cytoplasmic portion of the chain corresponds to 1-10; the sequence is MQLQKPLKIG. A helical transmembrane segment spans residues 11–31; sequence LGMMGAGLFGIIFGWVLFPVI. At 32 to 456 the chain is on the extracellular side; it reads LKSQLKKEMA…LKNQLFIPKR (425 aa). 2 N-linked (GlcNAc...) asparagine glycosylation sites follow: Asn67 and Asn229. 3 disulfide bridges follow: Cys268–Cys333, Cys297–Cys352, and Cys335–Cys341. A glycan (N-linked (GlcNAc...) asparagine) is linked at Asn440. A helical transmembrane segment spans residues 457–477; the sequence is IVSVVKWLLAGVGFVGLVGSL. At 478–527 the chain is on the cytoplasmic side; the sequence is VYQFKGKMINFALSPSSAPVTKVNPEINQQNQPKDISIIGESQNPPKVDM.

It belongs to the CD36 family. As to expression, principal component of the olfactory cilia membrane. Localizes to the antennal tissue with two to three fold higher expression in males compared to females.

It is found in the cell membrane. Its function is as follows. Plays an olfactory role that is not restricted to pheromone sensitivity. This chain is Sensory neuron membrane protein 1, found in Ostrinia nubilalis (European corn borer).